A 118-amino-acid polypeptide reads, in one-letter code: Large ribosomal subunit protein bL20 (118 aa).

Belongs to the bacterial ribosomal protein bL20 family.

Binds directly to 23S ribosomal RNA and is necessary for the in vitro assembly process of the 50S ribosomal subunit. It is not involved in the protein synthesizing functions of that subunit. The polypeptide is Large ribosomal subunit protein bL20 (Thermus thermophilus (strain ATCC BAA-163 / DSM 7039 / HB27)).